A 511-amino-acid chain; its full sequence is DEP domain-containing protein 7 (511 aa).

A DEP domain is found at 46–136 (LQTQVEVKKR…SSCSLYRFTT (91 aa)).

The protein belongs to the DEPDC7 family.

In Pongo abelii (Sumatran orangutan), this protein is DEP domain-containing protein 7 (DEPDC7).